Reading from the N-terminus, the 457-residue chain is MDAQLNNLWEQALNIIKGEISEISFNTWIKSCTPISISDNILKLSVPNEFTKGILDTRYKDLLIQALKIVTSRKFKIEFYLESDLEEEKENEEKQKEEKKDNTNDVDGSIVVSDEMSATLNPKYTFQSFVIGNSNRFAHAASLAVAESPAKAYNPLFIYGGVGLGKTHLMHAIGHYILQENPKAKVVYVSSEKFTNELINAIKDDKNEEFRNKYRKVDVLLIDDIQFIAGKERTQEEFFHTFNALHEENKQIILSSDRPPKEIPTLEDRLRSRFEWGLIADIQPPDFETRMAILKKKADVEGLSVPNEVMVYIATKIKSNIRELEGALIRIIAYSSLTNRDVSVDLASEALKDIISNKESAPVTVKTIQESVANYYNLRIEDLKSQRRTRNIAYPRQIAMYLSRKLTDMSLPKIGEEFGGRDHTTVIHAYEKISENLKTDEGLQSMINDITKKLTQK.

The tract at residues 1–75 is domain I, interacts with DnaA modulators; sequence MDAQLNNLWE…ALKIVTSRKF (75 aa). The segment at 75 to 118 is domain II; sequence FKIEFYLESDLEEEKENEEKQKEEKKDNTNDVDGSIVVSDEMSA. A disordered region spans residues 87–108; the sequence is EEKENEEKQKEEKKDNTNDVDG. Over residues 91 to 103 the composition is skewed to basic and acidic residues; that stretch reads NEEKQKEEKKDNT. Positions 119 to 335 are domain III, AAA+ region; the sequence is TLNPKYTFQS…GALIRIIAYS (217 aa). 4 residues coordinate ATP: G163, G165, K166, and T167. The segment at 336–457 is domain IV, binds dsDNA; it reads SLTNRDVSVD…NDITKKLTQK (122 aa).

Belongs to the DnaA family. Oligomerizes as a right-handed, spiral filament on DNA at oriC.

The protein resides in the cytoplasm. In terms of biological role, plays an essential role in the initiation and regulation of chromosomal replication. ATP-DnaA binds to the origin of replication (oriC) to initiate formation of the DNA replication initiation complex once per cell cycle. Binds the DnaA box (a 9 base pair repeat at the origin) and separates the double-stranded (ds)DNA. Forms a right-handed helical filament on oriC DNA; dsDNA binds to the exterior of the filament while single-stranded (ss)DNA is stabiized in the filament's interior. The ATP-DnaA-oriC complex binds and stabilizes one strand of the AT-rich DNA unwinding element (DUE), permitting loading of DNA polymerase. After initiation quickly degrades to an ADP-DnaA complex that is not apt for DNA replication. Binds acidic phospholipids. This is Chromosomal replication initiator protein DnaA from Clostridium perfringens (strain SM101 / Type A).